An 82-amino-acid polypeptide reads, in one-letter code: Turripeptide Lol6.1 (82 aa).

The N-terminal stretch at 1–23 (MRFHWIPTLTVLLVLSMSFGTEA) is a signal peptide. Positions 24 to 48 (IPXXXXXXXXXXXXXXXXXXXXXXX) are excised as a propeptide. Disulfide bonds link C54–C66, C58–C71, and C65–C77.

As to expression, expressed by the venom duct.

The protein localises to the secreted. In terms of biological role, acts as a neurotoxin by inhibiting an ion channel. The polypeptide is Turripeptide Lol6.1 (Iotyrris olangoensis (Sea snail)).